The sequence spans 248 residues: Probable transcriptional regulatory protein Pcar_2335 (248 aa).

This sequence belongs to the TACO1 family.

It is found in the cytoplasm. The chain is Probable transcriptional regulatory protein Pcar_2335 from Syntrophotalea carbinolica (strain DSM 2380 / NBRC 103641 / GraBd1) (Pelobacter carbinolicus).